Here is a 295-residue protein sequence, read N- to C-terminus: (R)-3-hydroxydecanoyl-ACP:CoA transacylase (295 aa).

The AB hydrolase-1 domain maps to 28–254; the sequence is NTIILINGSL…VIRDAGHFLD (227 aa).

The protein operates within polyester biosynthesis; polyhydroxyalkanoate biosynthesis. Its function is as follows. Catalyzes the transfer of the acyl moiety from in vitro synthesized 3-hydroxydecanoyl-CoA to acyl carrier protein. This Pseudomonas putida (strain ATCC 47054 / DSM 6125 / CFBP 8728 / NCIMB 11950 / KT2440) protein is (R)-3-hydroxydecanoyl-ACP:CoA transacylase (phaG).